Reading from the N-terminus, the 404-residue chain is uncharacterized protein (404 aa).

12 helical membrane-spanning segments follow: residues 3–23, 43–63, 73–93, 95–115, 135–155, 162–182, 216–236, 248–268, 280–300, 309–329, 346–366, and 377–397; these read IIAKIPAWMLLCLFTLSPITE, TTQITSSLYYLGFALGILTLG, PVVLFGLCIYAISSIISIFAP, IETLMLARFVQAFGVSVGSVI, SLSPWLLFIPSLGSSIGGYII, YTFVFFSLTGTVLLTLYCKIL, IIGAFNGIYYGFYIEAPFIFI, KLAFLLSFAGIFGGFLGGYLI, ILGLVFSVIGCSLLAIDALIL, IAVIMMFAPMMLHMVGHNLLI, TAGSVFGAIYYVLIAAVTFLV, and FALLFLVLSVSSAAAFYYILI.

This sequence belongs to the major facilitator superfamily. Bcr/CmlA family.

The protein localises to the cell inner membrane. This is an uncharacterized protein from Rickettsia bellii (strain RML369-C).